Here is a 260-residue protein sequence, read N- to C-terminus: Flap endonuclease Xni (260 aa).

Asp-105 is a Mg(2+) binding site. A 5'-3' exonuclease domain is found at 164–259; the sequence is NQFLDLMALA…VNGPANTQQA (96 aa). The K(+) site is built by Leu-172, Ala-173, Pro-181, Ile-183, and Ile-186. The tract at residues 185–190 is interaction with DNA; it reads GIGPKS.

It belongs to the Xni family. Requires Mg(2+) as cofactor. K(+) is required as a cofactor.

Has flap endonuclease activity. During DNA replication, flap endonucleases cleave the 5'-overhanging flap structure that is generated by displacement synthesis when DNA polymerase encounters the 5'-end of a downstream Okazaki fragment. This chain is Flap endonuclease Xni, found in Shewanella sp. (strain MR-4).